The primary structure comprises 144 residues: Large ribosomal subunit protein uL15 (144 aa).

A disordered region spans residues Met1–Gly51. Residues Leu23–Thr35 are compositionally biased toward gly residues.

It belongs to the universal ribosomal protein uL15 family. In terms of assembly, part of the 50S ribosomal subunit.

Functionally, binds to the 23S rRNA. This Limosilactobacillus reuteri (strain DSM 20016) (Lactobacillus reuteri) protein is Large ribosomal subunit protein uL15.